Reading from the N-terminus, the 599-residue chain is MGPKRRQLTFREKSRIIQEVEENPDLRKGEIARRFNIPPSTLSTILKNKRAILASERKYGVASTCRKTNKLSPYDKLEGLLIAWFQQIRAAGLPVKGIILKEKALRIAEELGMDDFTASNGWLDRFRRRHGVVSCSGVARARARNAAPRTPAAPASPAAVPSEGSGGSTTGWRAREEQPPSVAEGYASQDVFSATETSLWYDFLPDQAAGLCGGDGRPRQATQRLSVLLCANADGSEKLPPLVAGKSAKPRAGQAGLPCDYTANSKGGVTTQALAKYLKALDTRMAAESRRVLLLAGRLAAQSLDTSGLRHVQLAFFPPGTVHPLERGVVQQVKGHYRQAMLLKAMAALEGQDPSGLQLGLTEALHFVAAAWQAVEPSDIAACFREAGFGGGPNATITTSLKSEGEEEEEEEEEEEEEEGEGEEEEEEGEEEEEEGGEGEELGEEEEVEEEGDVDSDEEEEEDEESSSEGLEAEDWAQGVVEAGGSFGAYGAQEEAQCPTLHFLEGGEDSDSDSEEEDDEEEDDEDEDDDDDEEDGDEVPVPSFGEAMAYFAMVKRYLTSFPIDDRVQSHILHLEHDLVHVTRKNHARQAGVRGLGHQS.

N,N,N-trimethylglycine; alternate is present on Gly-2. Position 2 is a n,N-dimethylglycine; alternate (Gly-2). Gly-2 bears the N-methylglycine; alternate mark. The HTH psq-type domain maps to 2–52 (GPKRRQLTFREKSRIIQEVEENPDLRKGEIARRFNIPPSTLSTILKNKRAI). DNA-binding regions (H-T-H motif) lie at residues 28–48 (KGEI…ILKN) and 97–129 (GIIL…FRRR). In terms of domain architecture, HTH CENPB-type spans 65–136 (CRKTNKLSPY…RRRHGVVSCS (72 aa)). The segment at 143 to 184 (ARNAAPRTPAAPASPAAVPSEGSGGSTTGWRAREEQPPSVAE) is disordered. The segment covering 144 to 159 (RNAAPRTPAAPASPAA) has biased composition (low complexity). Ser-156 and Ser-165 each carry phosphoserine. Lys-246 is covalently cross-linked (Glycyl lysine isopeptide (Lys-Gly) (interchain with G-Cter in SUMO2)). 2 disordered regions span residues 387–475 (AGFG…EAED) and 495–544 (EAQC…VPSF). A phosphothreonine mark is found at Thr-396 and Thr-398. Composition is skewed to acidic residues over residues 405–475 (GEEE…EAED) and 506–538 (GGED…DGDE). The homodimerization stretch occupies residues 536–599 (GDEVPVPSFG…AGVRGLGHQS (64 aa)).

In terms of assembly, antiparallel homodimer. Interacts with CENPT. Identified in a centromere complex containing histones H2A, H2B and H4, and at least CENPA, CENPB, CENPC, CENPT, CENPN, HJURP, SUPT16H, SSRP1 and RSF1. Post-translationally, poly-ADP-ribosylated by PARP1. In terms of processing, N-terminally methylated by METTL11A/NTM1. Alpha-N-methylation is stimulated in response to extracellular stimuli, including increased cell density and heat shock, and seems to facilitate binding to CENP-B boxes. Chromatin-bound CENP-B is primarily trimethylated.

It localises to the nucleus. The protein resides in the chromosome. Its subcellular location is the centromere. Its function is as follows. Interacts with centromeric heterochromatin in chromosomes and binds to a specific 17 bp subset of alphoid satellite DNA, called the CENP-B box. May organize arrays of centromere satellite DNA into a higher-order structure which then directs centromere formation and kinetochore assembly in mammalian chromosomes. In Homo sapiens (Human), this protein is Major centromere autoantigen B (CENPB).